Consider the following 124-residue polypeptide: Fluoride-specific ion channel FluC (124 aa).

4 consecutive transmembrane segments (helical) span residues 1–21, 36–56, 66–86, and 94–114; these read MAYL…HFIN, TFFI…YLAF, LFLM…SLDA, and AVGL…AGLF. Na(+)-binding residues include Gly74 and Thr77.

The protein belongs to the fluoride channel Fluc/FEX (TC 1.A.43) family.

The protein resides in the cell inner membrane. The catalysed reaction is fluoride(in) = fluoride(out). Na(+) is not transported, but it plays an essential structural role and its presence is essential for fluoride channel function. Its function is as follows. Fluoride-specific ion channel. Important for reducing fluoride concentration in the cell, thus reducing its toxicity. This Rhodopseudomonas palustris (strain ATCC BAA-98 / CGA009) protein is Fluoride-specific ion channel FluC.